Consider the following 208-residue polypeptide: Guanylate kinase (208 aa).

The Guanylate kinase-like domain maps to 3–181 (GSLFIITAAS…ALTELKAIIV (179 aa)). 10–17 (AASGTGKT) contacts ATP.

Belongs to the guanylate kinase family.

The protein localises to the cytoplasm. The enzyme catalyses GMP + ATP = GDP + ADP. In terms of biological role, essential for recycling GMP and indirectly, cGMP. The chain is Guanylate kinase from Psychrobacter arcticus (strain DSM 17307 / VKM B-2377 / 273-4).